The following is a 325-amino-acid chain: Lipoyl synthase (325 aa).

Cys71, Cys76, Cys82, Cys97, Cys101, Cys104, and Ser311 together coordinate [4Fe-4S] cluster. One can recognise a Radical SAM core domain in the interval Phe83–Thr300.

Belongs to the radical SAM superfamily. Lipoyl synthase family. Requires [4Fe-4S] cluster as cofactor.

The protein resides in the cytoplasm. It catalyses the reaction [[Fe-S] cluster scaffold protein carrying a second [4Fe-4S](2+) cluster] + N(6)-octanoyl-L-lysyl-[protein] + 2 oxidized [2Fe-2S]-[ferredoxin] + 2 S-adenosyl-L-methionine + 4 H(+) = [[Fe-S] cluster scaffold protein] + N(6)-[(R)-dihydrolipoyl]-L-lysyl-[protein] + 4 Fe(3+) + 2 hydrogen sulfide + 2 5'-deoxyadenosine + 2 L-methionine + 2 reduced [2Fe-2S]-[ferredoxin]. It participates in protein modification; protein lipoylation via endogenous pathway; protein N(6)-(lipoyl)lysine from octanoyl-[acyl-carrier-protein]: step 2/2. Functionally, catalyzes the radical-mediated insertion of two sulfur atoms into the C-6 and C-8 positions of the octanoyl moiety bound to the lipoyl domains of lipoate-dependent enzymes, thereby converting the octanoylated domains into lipoylated derivatives. The protein is Lipoyl synthase of Methylobacillus flagellatus (strain ATCC 51484 / DSM 6875 / VKM B-1610 / KT).